Reading from the N-terminus, the 152-residue chain is Acidic phospholipase A2 homolog taipoxin gamma chain (152 aa).

Positions 1-19 (MHPAHLLVLLAVCVSLLGS) are cleaved as a signal peptide. Disulfide bonds link cysteine 38/cysteine 104, cysteine 42/cysteine 46, cysteine 54/cysteine 151, cysteine 56/cysteine 72, cysteine 71/cysteine 132, cysteine 78/cysteine 125, cysteine 88/cysteine 118, and cysteine 111/cysteine 123. Asparagine 97 is a glycosylation site (N-linked (GlcNAc...) asparagine).

The protein belongs to the phospholipase A2 family. Group I subfamily. D49 sub-subfamily. Heterotrimer of alpha, beta, and gamma chains; non-covalently linked. In terms of processing, contains 0.9% fucose, 2.2% mannose, 4.2% N-acetyl-D-glucosamine, 3.5% galactose, and 3.8% N-acetyl-neuraminic acid (sialic acid). As to expression, expressed by the venom gland.

Its subcellular location is the secreted. In terms of biological role, heterotrimer: Snake venom phospholipase A2 (PLA2) heterotrimer that acts as a potent presynaptic neurotoxin by blocking synaptic transmission and synaptic vesicle recycling. May act by binding in a calcium-dependent fashion to neurotonal pentraxin-1 (NPTX1) and neurotonal pentraxin-2 (NPTX2), but not to neuronal pentraxin receptor (NPTXR). Also binds to taipoxin-associated calcium binding protein 49 (RCN2), a protein localized in the lumen of endoplasmic reticulum. Monomer (gamma chain): Snake venom phospholipase A2 homolog that is neither toxic nor enzymatically active. Does not bind calcium. This Oxyuranus scutellatus scutellatus (Australian taipan) protein is Acidic phospholipase A2 homolog taipoxin gamma chain.